Consider the following 390-residue polypeptide: S-adenosylmethionine synthase (390 aa).

E12 serves as a coordination point for Mg(2+). H18 provides a ligand contact to ATP. E46 provides a ligand contact to K(+). The L-methionine site is built by E59 and Q102. Residues 170–172 (DGK), 238–241 (SGRF), D249, 255–256 (RK), A272, K276, and K280 each bind ATP. D249 is a binding site for L-methionine. L-methionine is bound at residue K280.

This sequence belongs to the AdoMet synthase family. As to quaternary structure, homotetramer. Requires Mn(2+) as cofactor. The cofactor is Mg(2+). Co(2+) serves as cofactor. K(+) is required as a cofactor.

Its subcellular location is the cytoplasm. The catalysed reaction is L-methionine + ATP + H2O = S-adenosyl-L-methionine + phosphate + diphosphate. It functions in the pathway amino-acid biosynthesis; S-adenosyl-L-methionine biosynthesis; S-adenosyl-L-methionine from L-methionine: step 1/1. Functionally, catalyzes the formation of S-adenosylmethionine from methionine and ATP. The reaction comprises two steps that are both catalyzed by the same enzyme: formation of S-adenosylmethionine (AdoMet) and triphosphate, and subsequent hydrolysis of the triphosphate. The polypeptide is S-adenosylmethionine synthase (METM) (Chlamydomonas reinhardtii (Chlamydomonas smithii)).